The chain runs to 467 residues: MAIVNSWLICLVSIFSFVVRVEAATFCNATQACPEDKPCCSQYGECGTGQYCLNNCDVRYSFSHDSCMPVPICKSSSTKFKDYSSKLGNANTFLGNVSEADWLYTGDVLDYDDEESLILAMPKNSGGTVLSSTRAVWYGKVSARIKTSHLAGVVTGFILYSGAGDELDYEFVGADLETAQTNFYWESVLNYTNSANISTTDTFENYHTYELDWHEDYVTWSIDGVVGRTLYKNETYNATTQKYQYPQTPSKVDISIWPGGNSTNAPGTIAWSGGEINWDASDISNPGYYYAIVNEVNITCYDPPSDTKKNGTSAYVYTSSSEFLAKDIAITDDEVMMDSDEGSGLDPHKGATTSSTQKSSSSTATSSSKTSSDHSSSTKKSSKTSSTASSSSSSSSSSSSSSSTATKNGDKVVSSVSSSVTSQTQTTSSVSGSASSSTSSMSGNNAGANVAANWRLTVLCVILGYVL.

The N-terminal stretch at 1-23 is a signal peptide; it reads MAIVNSWLICLVSIFSFVVRVEA. Asn28 is a glycosylation site (N-linked (GlcNAc...) asparagine). A disulfide bond links Cys56 and Cys67. A GH16 domain is found at 63–280; the sequence is SHDSCMPVPI…WSGGEINWDA (218 aa). Residue Asn96 is glycosylated (N-linked (GlcNAc...) asparagine). The active-site Nucleophile is the Glu166. Catalysis depends on Glu170, which acts as the Proton donor. Glu170 is a binding site for chitin. N-linked (GlcNAc...) asparagine glycans are attached at residues Asn190, Asn196, Asn233, and Asn237. Trp257 serves as a coordination point for chitin. Asn261 carries N-linked (GlcNAc...) asparagine glycosylation. Residue Thr268 participates in chitin binding. Residues Asn297 and Asn310 are each glycosylated (N-linked (GlcNAc...) asparagine). A disordered region spans residues 337 to 444; sequence MDSDEGSGLD…SSSTSSMSGN (108 aa). The span at 351–444 shows a compositional bias: low complexity; the sequence is ATTSSTQKSS…SSSTSSMSGN (94 aa). The GPI-anchor amidated asparagine moiety is linked to residue Asn445. The propeptide at 446-467 is removed in mature form; sequence AGANVAANWRLTVLCVILGYVL.

Belongs to the glycosyl hydrolase 16 family. CRH1 subfamily. Post-translationally, the GPI-anchor is attached to the protein in the endoplasmic reticulum and serves to target the protein to the cell surface. There, the glucosamine-inositol phospholipid moiety is cleaved off and the GPI-modified mannoprotein is covalently attached via its lipidless GPI glycan remnant to the 1,6-beta-glucan of the outer cell wall layer.

Its subcellular location is the secreted. It localises to the cell wall. The protein resides in the membrane. The catalysed reaction is Random endo-hydrolysis of N-acetyl-beta-D-glucosaminide (1-&gt;4)-beta-linkages in chitin and chitodextrins.. In terms of biological role, dual chitinase/transglycosylase that plays a role in cell wall architecture. Chitinase and transglycosylase activities are coupled. Required for the polysaccharide cross-linking at the septa and the cell wall. More specifically, transfers chitin to both beta(1-3)- and beta(1-6)glucan in the cell wall. The minimal number of intact hexopyranose units required in the molecule of the acceptor oligosaccharide is two and the effectivity of the acceptor increased with the increasing length of its oligosaccharide chain. This is Congo red hypersensitive protein 2 from Saccharomyces cerevisiae (strain ATCC 204508 / S288c) (Baker's yeast).